Reading from the N-terminus, the 164-residue chain is Probable ribosome biogenesis protein RLP24 (164 aa).

This sequence belongs to the eukaryotic ribosomal protein eL24 family. As to quaternary structure, associated with nucleolar and cytoplasmic pre-60S particles. At the end of biogenesis it dissociates from cytoplasmic pre-60S particles and is likely to be exchanged for its ribosomal homolog, RPL24.

Its subcellular location is the cytoplasm. The protein localises to the nucleus. In terms of biological role, involved in the biogenesis of the 60S ribosomal subunit. Ensures the docking of nog1 to pre-60S particles. Activates and recruits ATPase AFG2 to cytoplasmic pre-60S ribosomal particles. This chain is Probable ribosome biogenesis protein RLP24 (rlp24), found in Dictyostelium discoideum (Social amoeba).